Here is a 397-residue protein sequence, read N- to C-terminus: Riboflavin biosynthesis protein RibBA (397 aa).

The tract at residues 1–199 (MFHRIEEALE…IEDLIAYRRH (199 aa)) is DHBP synthase. D-ribulose 5-phosphate is bound by residues 26-27 (RE), Asp31, 138-142 (RAGHT), and Glu162. Glu27 lines the Mg(2+) pocket. His141 contacts Mg(2+). Residues 200-397 (HETLVTREVE…VNKLGHLLNL (198 aa)) are GTP cyclohydrolase II. 250 to 254 (RVHSE) lines the GTP pocket. Cys255, Cys266, and Cys268 together coordinate Zn(2+). GTP is bound by residues Gln271, 293–295 (EGR), and Thr315. Residue Asp327 is the Proton acceptor; for GTP cyclohydrolase activity of the active site. The active-site Nucleophile; for GTP cyclohydrolase activity is Arg329. Thr350 and Lys355 together coordinate GTP.

This sequence in the N-terminal section; belongs to the DHBP synthase family. In the C-terminal section; belongs to the GTP cyclohydrolase II family. Mg(2+) serves as cofactor. Requires Mn(2+) as cofactor. The cofactor is Zn(2+).

It carries out the reaction D-ribulose 5-phosphate = (2S)-2-hydroxy-3-oxobutyl phosphate + formate + H(+). It catalyses the reaction GTP + 4 H2O = 2,5-diamino-6-hydroxy-4-(5-phosphoribosylamino)-pyrimidine + formate + 2 phosphate + 3 H(+). It participates in cofactor biosynthesis; riboflavin biosynthesis; 2-hydroxy-3-oxobutyl phosphate from D-ribulose 5-phosphate: step 1/1. It functions in the pathway cofactor biosynthesis; riboflavin biosynthesis; 5-amino-6-(D-ribitylamino)uracil from GTP: step 1/4. Its function is as follows. Catalyzes the conversion of D-ribulose 5-phosphate to formate and 3,4-dihydroxy-2-butanone 4-phosphate. Catalyzes the conversion of GTP to 2,5-diamino-6-ribosylamino-4(3H)-pyrimidinone 5'-phosphate (DARP), formate and pyrophosphate. The sequence is that of Riboflavin biosynthesis protein RibBA from Bacillus cereus (strain ATCC 10987 / NRS 248).